The primary structure comprises 527 residues: MKYALILVLFFVVFIWQSSSSSANSETFTQCLTSNSDPKHPISPAIFFSGNGSYSSVLQANIRNLRFNTTSTPKPFLIIAATHESHVQAAITCGKRHNLQMKIRSGGHDYDGLSYVTYSGKPFFVLDMFNLRSVDVDVASKTAWVQTGAILGEVYYYIWEKSKTLAYPAGICPTVGVGGHISGGGYGNMMRKYGLTVDNTIDARMVDVNGKILDRKLMGEDLYWAINGGGGGSYGVVLAYKINLVEVPENVTVFRISRTLEQNATDIIHRWQQVAPKLPDELFIRTVIDVVNGTVSSQKTVRTTFIAMFLGDTTTLLSILNRRFPELGLVRSDCTETSWIQSVLFWTNIQVGSSETLLLQRNQPVNYLKRKSDYVREPISRTGLESIWKKMIELEIPTMAFNPYGGEMGRISSTVTPFPYRAGNLWKIQYGANWRDETLTDRYMELTRKLYQFMTPFVSKNPRQSFFNYRDVDLGINSHNGKISSYVEGKRYGKKYFAGNFERLVKIKTRVDSGNFFRNEQSIPVLP.

A signal peptide spans Met-1–Ser-20. A disulfide bridge connects residues Cys-31 and Cys-93. N-linked (GlcNAc...) asparagine glycans are attached at residues Asn-51 and Asn-68. Positions Ser-71 to Val-247 constitute an FAD-binding PCMH-type domain. The 6-(S-cysteinyl)-8alpha-(pros-histidyl)-FAD (His-Cys) cross-link spans His-108–Cys-172. 3 N-linked (GlcNAc...) asparagine glycosylation sites follow: Asn-250, Asn-263, and Asn-292.

Belongs to the oxygen-dependent FAD-linked oxidoreductase family. The cofactor is FAD. The FAD cofactor is bound via a bicovalent 6-S-cysteinyl, 8alpha-N1-histidyl FAD linkage.

The protein localises to the secreted. The protein resides in the cell wall. The protein is Berberine bridge enzyme-like 8 of Arabidopsis thaliana (Mouse-ear cress).